A 205-amino-acid polypeptide reads, in one-letter code: Holliday junction branch migration complex subunit RuvA (205 aa).

The tract at residues 1–67 (MIGWLKGDVQ…ADNLQLFGFL (67 aa)) is domain I. The domain II stretch occupies residues 68-146 (QLAERDLFRE…DSVASTGPER (79 aa)). A flexible linker region spans residues 147–155 (NQLDPVAPD). The domain III stretch occupies residues 155-205 (DLIATLETLGFETHEIRDALQRLNGMGGPQDGDDDDAWLRACIKLMSSTDP).

It belongs to the RuvA family. In terms of assembly, homotetramer. Forms an RuvA(8)-RuvB(12)-Holliday junction (HJ) complex. HJ DNA is sandwiched between 2 RuvA tetramers; dsDNA enters through RuvA and exits via RuvB. An RuvB hexamer assembles on each DNA strand where it exits the tetramer. Each RuvB hexamer is contacted by two RuvA subunits (via domain III) on 2 adjacent RuvB subunits; this complex drives branch migration. In the full resolvosome a probable DNA-RuvA(4)-RuvB(12)-RuvC(2) complex forms which resolves the HJ.

Its subcellular location is the cytoplasm. Functionally, the RuvA-RuvB-RuvC complex processes Holliday junction (HJ) DNA during genetic recombination and DNA repair, while the RuvA-RuvB complex plays an important role in the rescue of blocked DNA replication forks via replication fork reversal (RFR). RuvA specifically binds to HJ cruciform DNA, conferring on it an open structure. The RuvB hexamer acts as an ATP-dependent pump, pulling dsDNA into and through the RuvAB complex. HJ branch migration allows RuvC to scan DNA until it finds its consensus sequence, where it cleaves and resolves the cruciform DNA. The protein is Holliday junction branch migration complex subunit RuvA of Parasynechococcus marenigrum (strain WH8102).